We begin with the raw amino-acid sequence, 191 residues long: Small ribosomal subunit protein uS7 (191 aa).

Residues 56–80 are disordered; it reads NKSGEQGDGDGESGGKAGGIKKRSL.

It belongs to the universal ribosomal protein uS7 family. As to quaternary structure, part of the 30S ribosomal subunit. Contacts proteins S9 and S11.

Its function is as follows. One of the primary rRNA binding proteins, it binds directly to 16S rRNA where it nucleates assembly of the head domain of the 30S subunit. Is located at the subunit interface close to the decoding center, probably blocks exit of the E-site tRNA. The polypeptide is Small ribosomal subunit protein uS7 (Coxiella burnetii (strain CbuK_Q154) (Coxiella burnetii (strain Q154))).